The sequence spans 58 residues: ATP synthase F(0) complex subunit k, mitochondrial (58 aa).

N6-acetyllysine is present on residues Lys16 and Lys17. A helical transmembrane segment spans residues 23 to 45; that stretch reads TLTGRMNCVLATYGSIALIVLYF.

As to quaternary structure, component of the ATP synthase complex composed at least of ATP5F1A/subunit alpha, ATP5F1B/subunit beta, ATP5MC1/subunit c (homooctomer), MT-ATP6/subunit a, MT-ATP8/subunit 8, ATP5ME/subunit e, ATP5MF/subunit f, ATP5MG/subunit g, ATP5MK/subunit k, ATP5MJ/subunit j, ATP5F1C/subunit gamma, ATP5F1D/subunit delta, ATP5F1E/subunit epsilon, ATP5PF/subunit F6, ATP5PB/subunit b, ATP5PD/subunit d, ATP5PO/subunit OSCP. ATP synthase complex consists of a soluble F(1) head domain (subunits alpha(3) and beta(3)) - the catalytic core - and a membrane F(0) domain - the membrane proton channel (subunits c, a, 8, e, f, g, k and j). These two domains are linked by a central stalk (subunits gamma, delta, and epsilon) rotating inside the F1 region and a stationary peripheral stalk (subunits F6, b, d, and OSCP). The ATP synthase complex/complex V exists as a monomeric and a dimeric supercomplex that helps shape mitochondrial cristae to optimize proton flow.

Its subcellular location is the mitochondrion membrane. Functionally, subunit k, of the mitochondrial membrane ATP synthase complex (F(1)F(0) ATP synthase or Complex V) that produces ATP from ADP in the presence of a proton gradient across the membrane which is generated by electron transport complexes of the respiratory chain. ATP synthase complex consist of a soluble F(1) head domain - the catalytic core - and a membrane F(1) domain - the membrane proton channel. These two domains are linked by a central stalk rotating inside the F(1) region and a stationary peripheral stalk. During catalysis, ATP synthesis in the catalytic domain of F(1) is coupled via a rotary mechanism of the central stalk subunits to proton translocation. In vivo, can only synthesize ATP although its ATP hydrolase activity can be activated artificially in vitro. Part of the complex F(0) domain. Required for dimerization of the ATP synthase complex and as such regulates ATP synthesis in the mitochondria. The chain is ATP synthase F(0) complex subunit k, mitochondrial from Homo sapiens (Human).